A 263-amino-acid polypeptide reads, in one-letter code: UDP-N-acetylenolpyruvoylglucosamine reductase (263 aa).

Residue Arg146 is part of the active site. Ser188 serves as the catalytic Proton donor. Glu258 is an active-site residue.

This sequence belongs to the MurB family. FAD serves as cofactor.

It localises to the cytoplasm. The enzyme catalyses UDP-N-acetyl-alpha-D-muramate + NADP(+) = UDP-N-acetyl-3-O-(1-carboxyvinyl)-alpha-D-glucosamine + NADPH + H(+). Its pathway is cell wall biogenesis; peptidoglycan biosynthesis. Functionally, cell wall formation. This chain is UDP-N-acetylenolpyruvoylglucosamine reductase, found in Helicobacter hepaticus (strain ATCC 51449 / 3B1).